A 728-amino-acid chain; its full sequence is MNKRKILVTSALPYANGSIHLGHLVEYIQTDIWVRFQKMQEHEVHYVCADDAHGTPIMLRAEQEGITPRQLIDRVWHEHKTDFDGFHIGFDHYYTTDSPENQAFCEDIYRQLRAGELIAKRSVEQFYDPVKQMFLPDRYIKGECPRCHAGDQYGDSCEACGATYLPTDLISPYSAVSGARPERRTSNHYFFKLSDVRCEAFLKNWIFESIPAQPGVALETRPRLQPEAANKMNEWLSAGLVDWDISRDAPYFGFPIPRTGGKKFFYVWLDAPVGYFGSFKNYFKQNQRTQAEIDEFLRPGGNTEMVHFIGKDILYFHALFWPAMLEFSGYRTPTQIYAHGFLTVNGQKMSKSRGTFITAESYLKQGLNPEWLRYYYAAKLNDSMEDIDLSFEDFVARVNSDLVGKYVNIASRCAGFITKKFGGELTHNVSEASRKWFNQFLFCELGEGDTFLGRHMSIANFYERREYSKAIKEIMSAADVANQYVDRMKPWVLAKDSRNDRELHEVCSVALNMFRMLTVYLKPVLPKLAMEAEQFLGLDPLTWKDANSQHRLLPDGHRINDYQHLMTRIDPKQIEMLTHANKESLAPAKSQQVAQAVETMEKNSSTTPAPAKEGEAGQASASTISIEDFGKIDLRVAKILDAEHVPGADKLLKLTLDVASEQRTVFAGIKSAYDPGQLKGRLTVMVANLAPRKMKFGISEGMVLAAGDGEGPYLLSPDEGARPGMKVK.

A 'HIGH' region motif is present at residues 13 to 23 (PYANGSIHLGH). Positions 144, 147, 157, and 160 each coordinate Zn(2+). Residues 348–352 (KMSKS) carry the 'KMSKS' region motif. Lys-351 is a binding site for ATP. The segment at 585–620 (LAPAKSQQVAQAVETMEKNSSTTPAPAKEGEAGQAS) is disordered. A tRNA-binding domain is found at 628–728 (DFGKIDLRVA…EGARPGMKVK (101 aa)).

It belongs to the class-I aminoacyl-tRNA synthetase family. MetG type 1 subfamily. In terms of assembly, homodimer. Requires Zn(2+) as cofactor.

It localises to the cytoplasm. The enzyme catalyses tRNA(Met) + L-methionine + ATP = L-methionyl-tRNA(Met) + AMP + diphosphate. Is required not only for elongation of protein synthesis but also for the initiation of all mRNA translation through initiator tRNA(fMet) aminoacylation. The polypeptide is Methionine--tRNA ligase (Nitrosospira multiformis (strain ATCC 25196 / NCIMB 11849 / C 71)).